We begin with the raw amino-acid sequence, 239 residues long: Carboxy-S-adenosyl-L-methionine synthase (239 aa).

Residues Tyr35, 64–66 (GCS), 88–89 (DN), and Arg195 contribute to the S-adenosyl-L-methionine site.

This sequence belongs to the class I-like SAM-binding methyltransferase superfamily. Cx-SAM synthase family. In terms of assembly, homodimer.

The catalysed reaction is prephenate + S-adenosyl-L-methionine = carboxy-S-adenosyl-L-methionine + 3-phenylpyruvate + H2O. Catalyzes the conversion of S-adenosyl-L-methionine (SAM) to carboxy-S-adenosyl-L-methionine (Cx-SAM). This chain is Carboxy-S-adenosyl-L-methionine synthase, found in Helicobacter pylori (strain HPAG1).